We begin with the raw amino-acid sequence, 229 residues long: Nisin biosynthesis regulatory protein NisR (229 aa).

In terms of domain architecture, Response regulatory spans 4-117 (KILIVDDDQE…QLVAKVEANI (114 aa)). D53 carries the post-translational modification 4-aspartylphosphate. Residues 132–229 (EIRRDLGPIT…VRGLGYQWHG (98 aa)) constitute a DNA-binding region (ompR/PhoB-type).

Post-translationally, phosphorylated by NisK.

In terms of biological role, member of the two-component regulatory system NisK/NisR involved in the regulation of the biosynthesis of lantibiotic nisin. NisR may function as a regulatory protein. In Lactococcus lactis subsp. lactis (Streptococcus lactis), this protein is Nisin biosynthesis regulatory protein NisR (nisR).